A 291-amino-acid polypeptide reads, in one-letter code: 4-hydroxy-tetrahydrodipicolinate synthase (291 aa).

Thr-47 provides a ligand contact to pyruvate. The Proton donor/acceptor role is filled by Tyr-134. Lys-162 functions as the Schiff-base intermediate with substrate in the catalytic mechanism. A pyruvate-binding site is contributed by Ile-205.

Belongs to the DapA family. As to quaternary structure, homotetramer; dimer of dimers.

Its subcellular location is the cytoplasm. It carries out the reaction L-aspartate 4-semialdehyde + pyruvate = (2S,4S)-4-hydroxy-2,3,4,5-tetrahydrodipicolinate + H2O + H(+). It participates in amino-acid biosynthesis; L-lysine biosynthesis via DAP pathway; (S)-tetrahydrodipicolinate from L-aspartate: step 3/4. In terms of biological role, catalyzes the condensation of (S)-aspartate-beta-semialdehyde [(S)-ASA] and pyruvate to 4-hydroxy-tetrahydrodipicolinate (HTPA). In Methanosphaerula palustris (strain ATCC BAA-1556 / DSM 19958 / E1-9c), this protein is 4-hydroxy-tetrahydrodipicolinate synthase.